The primary structure comprises 175 residues: Large ribosomal subunit protein uL10 (175 aa).

The protein belongs to the universal ribosomal protein uL10 family. In terms of assembly, part of the ribosomal stalk of the 50S ribosomal subunit. The N-terminus interacts with L11 and the large rRNA to form the base of the stalk. The C-terminus forms an elongated spine to which L12 dimers bind in a sequential fashion forming a multimeric L10(L12)X complex.

In terms of biological role, forms part of the ribosomal stalk, playing a central role in the interaction of the ribosome with GTP-bound translation factors. This is Large ribosomal subunit protein uL10 from Prochlorococcus marinus subsp. pastoris (strain CCMP1986 / NIES-2087 / MED4).